Consider the following 30-residue polypeptide: Cyclotide cter-O (30 aa).

The cyclopeptide (Gly-Asn) cross-link spans 1-30 (GIPCGESCVFIPCITGIAGCSCKSKVCYRN). Intrachain disulfides connect Cys4–Cys20, Cys8–Cys22, and Cys13–Cys27.

Post-translationally, this is a cyclic peptide.

The protein resides in the secreted. In terms of biological role, probably participates in a plant defense mechanism. This chain is Cyclotide cter-O, found in Clitoria ternatea (Butterfly pea).